A 444-amino-acid chain; its full sequence is Trigger factor (444 aa).

In terms of domain architecture, PPIase FKBP-type spans 161 to 246 (GDRVVIDFKG…VQKVEGQKLP (86 aa)).

It belongs to the FKBP-type PPIase family. Tig subfamily.

It localises to the cytoplasm. It carries out the reaction [protein]-peptidylproline (omega=180) = [protein]-peptidylproline (omega=0). Involved in protein export. Acts as a chaperone by maintaining the newly synthesized protein in an open conformation. Functions as a peptidyl-prolyl cis-trans isomerase. In Saccharophagus degradans (strain 2-40 / ATCC 43961 / DSM 17024), this protein is Trigger factor.